We begin with the raw amino-acid sequence, 449 residues long: GTPase Der (449 aa).

2 EngA-type G domains span residues serine 3–proline 167 and threonine 175–serine 350. Residues glycine 9–serine 16, aspartate 56–phenylalanine 60, asparagine 119–aspartate 122, glycine 181–serine 188, aspartate 228–isoleucine 232, and asparagine 293–aspartate 296 contribute to the GTP site. A KH-like domain is found at arginine 351–glutamate 435.

This sequence belongs to the TRAFAC class TrmE-Era-EngA-EngB-Septin-like GTPase superfamily. EngA (Der) GTPase family. Associates with the 50S ribosomal subunit.

Functionally, GTPase that plays an essential role in the late steps of ribosome biogenesis. The protein is GTPase Der of Trichlorobacter lovleyi (strain ATCC BAA-1151 / DSM 17278 / SZ) (Geobacter lovleyi).